Consider the following 188-residue polypeptide: dCTP deaminase (188 aa).

DCTP is bound by residues 111-116 (KSTYAR), 135-137 (TLE), Gln-156, Tyr-170, and Gln-180. Glu-137 functions as the Proton donor/acceptor in the catalytic mechanism.

The protein belongs to the dCTP deaminase family. As to quaternary structure, homotrimer.

It carries out the reaction dCTP + H2O + H(+) = dUTP + NH4(+). Its pathway is pyrimidine metabolism; dUMP biosynthesis; dUMP from dCTP (dUTP route): step 1/2. Catalyzes the deamination of dCTP to dUTP. The chain is dCTP deaminase from Polaromonas sp. (strain JS666 / ATCC BAA-500).